The chain runs to 847 residues: Protein translocase subunit SecA (847 aa).

Residues glutamine 87, 105 to 109 (GEGKT), and aspartate 495 each bind ATP. A disordered region spans residues 828 to 847 (SSNSPSDARNRPIEHDDNAV). The segment covering 835 to 847 (ARNRPIEHDDNAV) has biased composition (basic and acidic residues).

This sequence belongs to the SecA family. As to quaternary structure, monomer and homodimer. Part of the essential Sec protein translocation apparatus which comprises SecA, SecYEG and auxiliary proteins SecDF. Other proteins may also be involved.

It localises to the cell membrane. The protein localises to the cytoplasm. The catalysed reaction is ATP + H2O + cellular proteinSide 1 = ADP + phosphate + cellular proteinSide 2.. Part of the Sec protein translocase complex. Interacts with the SecYEG preprotein conducting channel. Has a central role in coupling the hydrolysis of ATP to the transfer of proteins into and across the cell membrane, serving as an ATP-driven molecular motor driving the stepwise translocation of polypeptide chains across the membrane. The sequence is that of Protein translocase subunit SecA from Tropheryma whipplei (strain TW08/27) (Whipple's bacillus).